We begin with the raw amino-acid sequence, 253 residues long: 5-oxoprolinase subunit A (253 aa).

This sequence belongs to the LamB/PxpA family. As to quaternary structure, forms a complex composed of PxpA, PxpB and PxpC.

It catalyses the reaction 5-oxo-L-proline + ATP + 2 H2O = L-glutamate + ADP + phosphate + H(+). Catalyzes the cleavage of 5-oxoproline to form L-glutamate coupled to the hydrolysis of ATP to ADP and inorganic phosphate. In Bacillus cereus (strain B4264), this protein is 5-oxoprolinase subunit A.